The sequence spans 138 residues: Putative pre-16S rRNA nuclease (138 aa).

This sequence belongs to the YqgF nuclease family.

Its subcellular location is the cytoplasm. Its function is as follows. Could be a nuclease involved in processing of the 5'-end of pre-16S rRNA. The sequence is that of Putative pre-16S rRNA nuclease from Cronobacter sakazakii (strain ATCC BAA-894) (Enterobacter sakazakii).